We begin with the raw amino-acid sequence, 76 residues long: MAFLKKSLFLVLFLGLVSLSICEEEKRENEDEEEQEDEEQSEEKRASWKVFLKNIGKAAGKAVLNSVTDMVNQGEQ.

A signal peptide spans Met1–Cys22. A propeptide spanning residues Glu23–Arg45 is cleaved from the precursor. Residues Glu24–Lys44 form a disordered region. The span at Glu30–Ser41 shows a compositional bias: acidic residues. Glutamine amide is present on Gln73. The propeptide occupies Gly74 to Gln76.

In terms of tissue distribution, expressed by the skin glands.

Its subcellular location is the secreted. It is found in the target cell membrane. Functionally, antimicrobial peptide with activity against Gram-positive and Gram-negative bacteria and fungi. Has been tested against E.coli (MIC=2.68-8 uM), S.aureus (ATCC 25923, MIC=2.68-8 uM), S.aureus (ATCC oxacillin resistant, MIC=2.68 uM), K.pneumoniae (MIC=10.71 uM) and C.albicans (MIC=10.71-32 uM). Probably acts by disturbing membrane functions with its alpha-helical amphipathic structure. May penetrate bacterial membranes, but stay at the mammalian membrane surface. Shows a very weak hemolytic activity. This is Dermaseptin-SP2 from Agalychnis spurrelli (Gliding leaf frog).